The primary structure comprises 97 residues: MFCVIYRSSKRDQTYLYVEKKDDFSRVPEDLMKGFGQPTLAMILPLDGRKKLVNADLEKVKQALTDQGYYLQLPPPPEDLLKQHLSAPGENKPDAKS.

A YcgL domain is found at 1-85; it reads MFCVIYRSSK…PPEDLLKQHL (85 aa). The disordered stretch occupies residues 74–97; it reads PPPPEDLLKQHLSAPGENKPDAKS.

In Citrobacter koseri (strain ATCC BAA-895 / CDC 4225-83 / SGSC4696), this protein is YcgL domain-containing protein CKO_01183.